The primary structure comprises 326 residues: Transcription factor WRKY45-1 (326 aa).

2 disordered regions span residues 67-114 (GGEG…SVVV) and 252-288 (GVGS…FGPD). Positions 112-180 (VVVKNLDDGQ…YIGEHTCRDP (69 aa)) form a DNA-binding region, WRKY. The segment covering 273 to 283 (RGGGGGGGVAG) has biased composition (gly residues).

The protein belongs to the WRKY group III family. As to expression, expressed in aleurone cells.

It is found in the nucleus. Its function is as follows. Transcriptional activator involved in defense responses against pathogens. Acts as a positive regulator of defense responses against the rice blast fungus Magnaporthe oryzae. Acts through W-boxes, which are cis-elements that are enriched in the promoters of several defense-related genes. Plays an important role in the benzothiadiazole-induced disease resistance by mediating salicylic acid (SA) defense signaling pathway, independently of the disease resistance gene NPR1/NH1. Acts as a negative regulator of defense responses against the bacterial blight Xanthomonas oryzae pv oryzae (Xoo) and the bacterial streak Xanthomonas oryzae pv oryzicola (Xoc). Acts downstream of abscisic acid (ABA) signaling in response to the rice blast fungus. ABA is a negative regulator of defense responses that interacts antagonistically with salicylic acid (SA) signaling pathway. Acts as a negative regulator of ABA signaling that suppresses growth of seedlings. Does not seem to be involved in the regulation of salt stress response. Acts as a negative regulator of cold stress response. Acts as a negative regulator of drought stress response. The chain is Transcription factor WRKY45-1 from Oryza sativa subsp. japonica (Rice).